Reading from the N-terminus, the 248-residue chain is DNA polymerase sliding clamp 2 (248 aa).

This sequence belongs to the PCNA family. Homotrimer. The subunits circularize to form a toroid; DNA passes through its center. Replication factor C (RFC) is required to load the toroid on the DNA.

Functionally, sliding clamp subunit that acts as a moving platform for DNA processing. Responsible for tethering the catalytic subunit of DNA polymerase and other proteins to DNA during high-speed replication. The polypeptide is DNA polymerase sliding clamp 2 (Sulfurisphaera ohwakuensis).